The chain runs to 1671 residues: Fatty acid synthase alpha subunit aflA (1671 aa).

The disordered stretch occupies residues Ile-40–Thr-60. Residues Glu-47–Pro-58 are compositionally biased toward pro residues. The Carrier domain maps to Asp-75–Lys-153. Position 113 is an O-(pantetheine 4'-phosphoryl)serine (Ser-113). Residues Gly-492–Ala-729 are ketoreductase (KR) domain. A Ketosynthase family 3 (KS3) domain is found at Met-926–Ala-1428. Cys-1113 acts as the For beta-ketoacyl synthase activity in catalysis. The span at Ser-1244–Ser-1270 shows a compositional bias: low complexity. A disordered region spans residues Ser-1244–Thr-1288. Active-site for beta-ketoacyl synthase activity residues include His-1313 and His-1354. Positions Pro-1497 to Gly-1521 are disordered. Asp-1552 contacts Mg(2+). Residues Asp-1552–Val-1554, Glu-1598–Ser-1608, His-1622–Asn-1625, and Ile-1652–Tyr-1654 each bind acetyl-CoA. Ser-1653 is a Mg(2+) binding site.

It belongs to the thiolase-like superfamily. Fungal fatty acid synthetase subunit alpha family. As to quaternary structure, [Alpha(6)beta(6)] hexamers of two multifunctional subunits (alpha and beta). In terms of processing, 4'-phosphopantetheine is transferred from CoA to a specific serine of the acyl carrier domain by the C-terminal PPT domain. This modification is essential for activity because fatty acids are bound in thioester linkage to the sulfhydryl of the prosthetic group.

It carries out the reaction acetyl-CoA + n malonyl-CoA + 2n NADPH + 4n H(+) = a long-chain-acyl-CoA + n CoA + n CO2 + 2n NADP(+).. The catalysed reaction is a fatty acyl-[ACP] + malonyl-[ACP] + H(+) = a 3-oxoacyl-[ACP] + holo-[ACP] + CO2. The enzyme catalyses a (3R)-hydroxyacyl-[ACP] + NADP(+) = a 3-oxoacyl-[ACP] + NADPH + H(+). The protein operates within mycotoxin biosynthesis; aflatoxin biosynthesis. Its function is as follows. Fatty acid synthase alpha subunit; part of the gene cluster that mediates the biosynthesis of aflatoxins, a group of polyketide-derived furanocoumarins, and part of the most toxic and carcinogenic compounds among the known mycotoxins. The four major aflatoxins produced by A.parasiticus are aflatoxin B1 (AFB1), aflatoxin B2 (AFB2), aflatoxin G1 (AFG1) and aflatoxin G2 (AFG2). Within the aflatoxin pathway, the fungal fatty acid synthase aflA/aflB provides the hexanoyl starter unit to the acyl-carrier protein (ACP) domain of the norsolorinic acid synthase to allow the first step of the pathway. The biosynthesis of aflatoxins begins with the norsolorinic acid synthase aflC that combines a hexanoyl starter unit produced by the fatty acid synthase aflA/aflB and 7 malonyl-CoA extender units to synthesize the precursor NOR. The second step is the conversion of NOR to averantin (AVN) and requires the norsolorinic acid ketoreductase aflD, which catalyzes the dehydration of norsolorinic acid to form (1'S)-averantin. The norsolorinic acid reductases aflE and aflF may also play a role in the conversion of NOR to AVN. The cytochrome P450 monooxygenase aflG then catalyzes the hydroxylation of AVN to 5'hydroxyaverantin (HAVN). The next step is performed by the 5'-hydroxyaverantin dehydrogenase aflH that transforms HAVN to 5'-oxoaverantin (OAVN) which is further converted to averufin (AVF) by aflK that plays a dual role in the pathway, as a 5'-oxoaverantin cyclase that mediates conversion of 5'-oxoaverantin, as well as a versicolorin B synthase in a later step in the pathway. The averufin oxidase aflI catalyzes the conversion of AVF to versiconal hemiacetal acetate (VHA). VHA is then the substrate for the versiconal hemiacetal acetate esterase aflJ to yield versiconal (VAL). Versicolorin B synthase aflK then converts VAL to versicolorin B (VERB) by closing the bisfuran ring of aflatoxin which is required for DNA-binding, thus giving to aflatoxin its activity as a mutagen. Then, the activity of the versicolorin B desaturase aflL leads to versicolorin A (VERA). A branch point starts from VERB since it can also be converted to dihydrodemethylsterigmatocystin (DMDHST), probably also by aflL, VERA being a precursor for aflatoxins B1 and G1, and DMDHST for aflatoxins B2 and G2. Next, the versicolorin reductase aflM and the cytochrome P450 monooxygenase aflN are involved in conversion of VERA to demethylsterigmatocystin (DMST). AflX and aflY seem also involved in this step, through probable aflX-mediated epoxide ring-opening step following versicolorin A oxidation and aflY-mediated Baeyer-Villiger oxidation required for the formation of the xanthone ring. The methyltransferase aflO then leads to the modification of DMST to sterigmatocystin (ST), and of DMDHST to dihydrosterigmatocystin (DHST). Both ST and DHST are then substrates of the O-methyltransferase aflP to yield O-methylsterigmatocystin (OMST) and dihydro-O-methylsterigmatocystin (DHOMST), respectively. Finally OMST is converted to aflatoxins B1 and G1, and DHOMST to aflatoxins B2 and G2, via the action of several enzymes including O-methylsterigmatocystin oxidoreductase aflQ, the cytochrome P450 monooxygenase aflU, but also the NADH-dependent flavin oxidoreductase nadA which is specifically required for the synthesis of AFG1. This is Fatty acid synthase alpha subunit aflA from Aspergillus parasiticus (strain ATCC 56775 / NRRL 5862 / SRRC 143 / SU-1).